The primary structure comprises 217 residues: Non-structural protein NS3 (217 aa).

It belongs to the orbivirus NS3 family.

In terms of biological role, may play a role in the release of virions from infected cells. The protein is Non-structural protein NS3 (Segment-10) of African horse sickness virus 9 (AHSV-9).